The primary structure comprises 227 residues: Cytochrome c oxidase subunit 2 (227 aa).

Topologically, residues 1–14 (MAYPFQLGLQDATS) are mitochondrial intermembrane. The chain crosses the membrane as a helical span at residues 15–45 (PIMEELMNFHDHTLMIVFLISSLVLYIISLM). Over 46–59 (LTTKLTHTSTMDAQ) the chain is Mitochondrial matrix. The chain crosses the membrane as a helical span at residues 60–87 (EVETIWTILPAAILILIALPSLRILYMM). The Mitochondrial intermembrane segment spans residues 88 to 227 (DEINNPVLTV…YFENWSASMI (140 aa)). Cu cation is bound by residues H161, C196, E198, C200, H204, and M207. E198 provides a ligand contact to Mg(2+). Position 218 is a phosphotyrosine (Y218).

Belongs to the cytochrome c oxidase subunit 2 family. In terms of assembly, component of the cytochrome c oxidase (complex IV, CIV), a multisubunit enzyme composed of 14 subunits. The complex is composed of a catalytic core of 3 subunits MT-CO1, MT-CO2 and MT-CO3, encoded in the mitochondrial DNA, and 11 supernumerary subunits COX4I, COX5A, COX5B, COX6A, COX6B, COX6C, COX7A, COX7B, COX7C, COX8 and NDUFA4, which are encoded in the nuclear genome. The complex exists as a monomer or a dimer and forms supercomplexes (SCs) in the inner mitochondrial membrane with NADH-ubiquinone oxidoreductase (complex I, CI) and ubiquinol-cytochrome c oxidoreductase (cytochrome b-c1 complex, complex III, CIII), resulting in different assemblies (supercomplex SCI(1)III(2)IV(1) and megacomplex MCI(2)III(2)IV(2)). Found in a complex with TMEM177, COA6, COX18, COX20, SCO1 and SCO2. Interacts with TMEM177 in a COX20-dependent manner. Interacts with COX20. Interacts with COX16. It depends on Cu cation as a cofactor.

Its subcellular location is the mitochondrion inner membrane. The enzyme catalyses 4 Fe(II)-[cytochrome c] + O2 + 8 H(+)(in) = 4 Fe(III)-[cytochrome c] + 2 H2O + 4 H(+)(out). Component of the cytochrome c oxidase, the last enzyme in the mitochondrial electron transport chain which drives oxidative phosphorylation. The respiratory chain contains 3 multisubunit complexes succinate dehydrogenase (complex II, CII), ubiquinol-cytochrome c oxidoreductase (cytochrome b-c1 complex, complex III, CIII) and cytochrome c oxidase (complex IV, CIV), that cooperate to transfer electrons derived from NADH and succinate to molecular oxygen, creating an electrochemical gradient over the inner membrane that drives transmembrane transport and the ATP synthase. Cytochrome c oxidase is the component of the respiratory chain that catalyzes the reduction of oxygen to water. Electrons originating from reduced cytochrome c in the intermembrane space (IMS) are transferred via the dinuclear copper A center (CU(A)) of subunit 2 and heme A of subunit 1 to the active site in subunit 1, a binuclear center (BNC) formed by heme A3 and copper B (CU(B)). The BNC reduces molecular oxygen to 2 water molecules using 4 electrons from cytochrome c in the IMS and 4 protons from the mitochondrial matrix. This is Cytochrome c oxidase subunit 2 (MT-CO2) from Praomys tullbergi (Tullberg's soft-furred rat).